Reading from the N-terminus, the 152-residue chain is UPF0225 protein YchJ (152 aa).

It belongs to the UPF0225 family.

The protein is UPF0225 protein YchJ of Shigella boydii serotype 18 (strain CDC 3083-94 / BS512).